We begin with the raw amino-acid sequence, 152 residues long: MTHDHKLKVEAIKRGTVIDHIPAQVGFKILSLFRLTETDERITVGFNLPSENLGKKDLIKIENVFLTAEQANRLAMYAPQATVNIIDDYQVVNKMALSLPELLEDVVPCPNSNCISHNEPVQSSFRVKKFASDVVLTCKYCEKEFERHAVIR.

Zn(2+) is bound by residues cysteine 109, cysteine 114, cysteine 138, and cysteine 141.

This sequence belongs to the PyrI family. As to quaternary structure, contains catalytic and regulatory chains. It depends on Zn(2+) as a cofactor.

Its function is as follows. Involved in allosteric regulation of aspartate carbamoyltransferase. In Proteus mirabilis (strain HI4320), this protein is Aspartate carbamoyltransferase regulatory chain.